Consider the following 507-residue polypeptide: Ribosomal protein uS12 methylthiotransferase RimO (507 aa).

Residues Arg13–Ala124 enclose the MTTase N-terminal domain. [4Fe-4S] cluster contacts are provided by Cys22, Cys58, Cys87, Cys205, Cys209, and Cys212. In terms of domain architecture, Radical SAM core spans Leu191–Arg422. In terms of domain architecture, TRAM spans Glu424–Ala497.

Belongs to the methylthiotransferase family. RimO subfamily. It depends on [4Fe-4S] cluster as a cofactor.

It is found in the cytoplasm. It carries out the reaction L-aspartate(89)-[ribosomal protein uS12]-hydrogen + (sulfur carrier)-SH + AH2 + 2 S-adenosyl-L-methionine = 3-methylsulfanyl-L-aspartate(89)-[ribosomal protein uS12]-hydrogen + (sulfur carrier)-H + 5'-deoxyadenosine + L-methionine + A + S-adenosyl-L-homocysteine + 2 H(+). Its function is as follows. Catalyzes the methylthiolation of an aspartic acid residue of ribosomal protein uS12. The polypeptide is Ribosomal protein uS12 methylthiotransferase RimO (Salinispora tropica (strain ATCC BAA-916 / DSM 44818 / JCM 13857 / NBRC 105044 / CNB-440)).